We begin with the raw amino-acid sequence, 208 residues long: Ras-related protein Rab-6A (208 aa).

S2 is modified (N-acetylserine). GTP contacts are provided by S23, V24, G25, K26, T27, S28, D39, N40, Y42, and T45. Residue T27 coordinates Mg(2+). A Switch 1 motif is present at residues 32-50 (RFMYDSFDNTYQATIGIDF). Residues T45 and D68 each contribute to the Mg(2+) site. The short motif at 69–88 (TAGQERFRSLIPSYIRDSTV) is the Switch 2 element. GTP is bound by residues G71, N126, K127, D129, S156, A157, and K158. At S184 the chain carries Phosphoserine. Residues C206 and C208 are each lipidated (S-geranylgeranyl cysteine). C208 carries the cysteine methyl ester modification.

Belongs to the small GTPase superfamily. Rab family. In terms of assembly, interacts with BICDL1; leads to its accumulation in the pericentrosomal region. Interacts with SCYL1BP1. Interacts with VSP52. Interacts with RABGAP1. Interacts with GCC2 (via its GRIP domain). Interacts with RAB6IP1 (via its RUN 1 domain). Interacts with TMF1. Interacts with CIMAP3. Interacts (GTP-bound) with APBA1/MINT1 isoform 3, also called Mint1_826, but not with isoform 1. Interacts with RIC1; the interaction is direct with a preference for RAB6A-GDP. Interacts with RGP1; the interaction is direct with a preference for RAB6A-GDP. As to quaternary structure, interacts (GTP-bound) with DYNLRB1; the interaction is direct. Interacts with BICD1. Interacts with BICD2; the interaction is direct. Interacts (GTP-bound) with VPS13B. Interacts with BICD1. Interacts (GDP-bound) with DYNLRB1; the interaction is direct. Interacts (GTP-bound) with VPS13B. Requires Mg(2+) as cofactor. In terms of processing, prenylated.

Its subcellular location is the golgi apparatus membrane. It is found in the cytoplasmic vesicle. The protein resides in the secretory vesicle. It localises to the acrosome membrane. It catalyses the reaction GTP + H2O = GDP + phosphate + H(+). With respect to regulation, regulated by guanine nucleotide exchange factors (GEFs) which promote the exchange of bound GDP for free GTP. Regulated by GTPase activating proteins (GAPs) which increase the GTP hydrolysis activity. Inhibited by GDP dissociation inhibitors (GDIs). Functionally, the small GTPases Rab are key regulators of intracellular membrane trafficking, from the formation of transport vesicles to their fusion with membranes. Rabs cycle between an inactive GDP-bound form and an active GTP-bound form that is able to recruit to membranes different sets of downstream effectors directly responsible for vesicle formation, movement, tethering and fusion. RAB6A acts as a regulator of COPI-independent retrograde transport from the Golgi apparatus towards the endoplasmic reticulum (ER). Has a low GTPase activity. Recruits VPS13B to the Golgi membrane. Plays a role in neuron projection development. This Mus musculus (Mouse) protein is Ras-related protein Rab-6A.